Reading from the N-terminus, the 625-residue chain is Prothrombin (625 aa).

A signal peptide spans 1-24 (MARVRGPRLPGCLALAALFSLVHS). A propeptide spanning residues 25–43 (QHVFLAHQQASSLLQRARR) is cleaved from the precursor. The 47-residue stretch at 44-90 (ANKGFLEEVRKGNLERECLEEPCSREEAFEALESLSATDAFWAKYTA) folds into the Gla domain. 4-carboxyglutamate occurs at positions 50, 51, 58, 60, 63, 64, 69, 70, 73, and 76. The cysteines at positions 61 and 66 are disulfide-linked. Cystine bridges form between Cys-91-Cys-104, Cys-109-Cys-187, Cys-130-Cys-170, Cys-158-Cys-182, Cys-214-Cys-292, Cys-235-Cys-275, Cys-263-Cys-287, Cys-339-Cys-485, Cys-394-Cys-410, Cys-539-Cys-553, and Cys-567-Cys-597. 2 consecutive Kringle domains span residues 109 to 187 (CAEG…VPVC) and 214 to 292 (CVPD…LNYC). Asn-120 and Asn-144 each carry an N-linked (GlcNAc...) asparagine glycan. The region spanning 367-621 (IVEGQDAEVG…LKKWIQKVID (255 aa)) is the Peptidase S1 domain. The active-site Charge relay system is the His-409. Residue Asn-419 is glycosylated (N-linked (GlcNAc...) asparagine). Asp-465 functions as the Charge relay system in the catalytic mechanism. The segment at 554–576 (AGYKPGEGKRGDACEGDSGGPFV) is high affinity receptor-binding region which is also known as the TP508 peptide. Ser-571 serves as the catalytic Charge relay system.

Belongs to the peptidase S1 family. In terms of assembly, heterodimer (named alpha-thrombin) of a light and a heavy chain; disulfide-linked. Forms a heterodimer with SERPINA5. In plasma, interacts (via N-terminus) with alpha-1-microglobulin; this interaction does not prevent the activation of prothrombin to thrombin. Post-translationally, the gamma-carboxyglutamyl residues, which bind calcium ions, result from the carboxylation of glutamyl residues by a microsomal enzyme, the vitamin K-dependent carboxylase. The modified residues are necessary for the calcium-dependent interaction with a negatively charged phospholipid surface, which is essential for the conversion of prothrombin to thrombin. In the penultimate step of the coagulation cascade, prothrombin is converted to thrombin by the prothrombinase complex composed of factor Xa (F10), cofactor Va (F5), and phospholipids. This activation requires factor Xa-catalyzed sequential cleavage at 2 sites, Arg-317 and Arg-366, along 2 possible pathways. In the first pathway, the first cleavage occurs at Arg-317, leading to the formation of the inactive intermediate prethrombin-2. This pathway preferentially occurs on platelets and in the absence of cofactor Va. In the second pathway, the first cleavage occurs at Arg-366, which separates protease domain into 2 chains that remain connected through a disulfide bond and generates the active intermediate meizothrombin. The presence of cofactor Va directs activation along the meizothrombin pathway and greatly accelerates the rate of cleavage at Arg-366, but has a smaller effect on the cleavage of meizothrombin at Arg-317. Meizothrombin accumulates as an intermediate when prothrombinase is assembled on the membrane of red blood cells. As to expression, expressed by the liver and secreted in plasma.

The protein localises to the secreted. It is found in the extracellular space. It catalyses the reaction Selective cleavage of Arg-|-Gly bonds in fibrinogen to form fibrin and release fibrinopeptides A and B.. Its activity is regulated as follows. Activity is promoted in the presence of negatively charged surfaces, such as polyphosphate and dextran sulfate. Inhibited by SERPINA5. In terms of biological role, thrombin, which cleaves bonds after Arg and Lys, converts fibrinogen to fibrin and activates factors V, VII, VIII, XIII, and, in complex with thrombomodulin, protein C. Functions in blood homeostasis, inflammation and wound healing. Activates coagulation factor XI (F11); activation is promoted by the contact with negatively charged surfaces. Triggers the production of pro-inflammatory cytokines, such as MCP-1/CCL2 and IL8/CXCL8, in endothelial cells. In Bos taurus (Bovine), this protein is Prothrombin (F2).